Consider the following 1015-residue polypeptide: Protein HIRA (1015 aa).

WD repeat units follow at residues 11 to 53 (HNGK…QEDD) and 68 to 107 (NHLA…GPST). Phosphoserine is present on Ser-111. 5 WD repeats span residues 129–168 (SHSG…EILA), 172–211 (GHSG…LETS), 220–263 (GGTT…TNMD), 266–322 (GHRK…PLVV), and 326–367 (LFDK…DPLS). Positions 408 to 431 (QQQQQLDQKNATTRETSSASSVTG) are disordered. Polar residues predominate over residues 413–431 (LDQKNATTRETSSASSVTG). Residues 421–479 (RETSSASSVTGVVNGESLEDIRKNLLKKQVETRTADGRRRITPLCIAQLDTGDFSTAFF) form an interaction with ASF1A region. The tract at residues 421 to 727 (RETSSASSVT…RLKCNREGKE (307 aa)) is interaction with CCNA1. The required for repression of histone gene transcription stretch occupies residues 439-475 (EDIRKNLLKKQVETRTADGRRRITPLCIAQLDTGDFS). Low complexity-rich tracts occupy residues 494 to 507 (SSPS…LDSS) and 540 to 556 (ATST…TTPS). Residues 494–558 (SSPSGQQLLP…PSVLTTPSKI (65 aa)) are disordered. Position 548 is a phosphoserine (Ser-548). Thr-554 carries the post-translational modification Phosphothreonine. Ser-556 bears the Phosphoserine mark. At Thr-575 the chain carries Phosphothreonine. Phosphoserine occurs at positions 583, 608, 609, 610, 612, 659, and 673. 2 interaction with PAX3 regions span residues 593–737 (KEQN…SRVL) and 738–826 (TAAG…SQIL). The interval 594 to 824 (EQNLVKELRS…LSGSDMTVSQ (231 aa)) is interaction with histone H2B. Positions 603–617 (SRELESSSDSDEKVH) are enriched in basic and acidic residues. Residues 603–623 (SRELESSSDSDEKVHLAKPSS) form a disordered region. The interval 736 to 1015 (VLTAAGSCDV…QEQLDILRDK (280 aa)) is interaction with histone H4.

The protein belongs to the WD repeat HIR1 family. As to quaternary structure, interacts with CCNA1, HIRIP3 and NFU1/HIRIP5. Part of a complex which includes ASF1A, CABIN1, histone H3.3, histone H4 and UBN1. Interacts with histone H2B, histone H3-3B, PAX3 and PAX7. Sumoylated. In terms of processing, phosphorylated by CDK2/CCNA1 and CDK2/CCNE1 on Thr-554 in vitro. Also phosphorylated on Thr-554 in vivo. Expressed in cerebrum, cerebellum, heart, kidney, liver, lung and spleen.

It is found in the nucleus. The protein resides in the PML body. Functionally, required for the periodic repression of histone gene transcription during the cell cycle. Cooperates with ASF1A to promote replication-independent chromatin assembly. Required for the formation of senescence-associated heterochromatin foci (SAHF) and efficient senescence-associated cell cycle exit. The polypeptide is Protein HIRA (Hira) (Mus musculus (Mouse)).